The following is a 239-amino-acid chain: Large ribosomal subunit protein uL1 (239 aa).

Belongs to the universal ribosomal protein uL1 family. As to quaternary structure, part of the 50S ribosomal subunit.

Binds directly to 23S rRNA. The L1 stalk is quite mobile in the ribosome, and is involved in E site tRNA release. Functionally, protein L1 is also a translational repressor protein, it controls the translation of the L11 operon by binding to its mRNA. This Rickettsia bellii (strain OSU 85-389) protein is Large ribosomal subunit protein uL1.